A 363-amino-acid polypeptide reads, in one-letter code: RNA polymerase I-specific transcription initiation factor RRN5 (363 aa).

The disordered stretch occupies residues 301 to 344 (LSRRDAPPVHQDENQENQENQENQEQDNTASEGESEAERDEIDE). Over residues 302-313 (SRRDAPPVHQDE) the composition is skewed to basic and acidic residues. Positions 317-328 (NQENQENQEQDN) are enriched in low complexity. Positions 333–344 (GESEAERDEIDE) are enriched in acidic residues.

Component of the UAF (upstream activation factor) complex which consists of UAF30, RRN5, RRN9, RRN10, and histones H3 and H4.

It is found in the nucleus. It localises to the nucleolus. Component of the UAF (upstream activation factor) complex which interacts with the upstream element of the RNA polymerase I promoter and forms a stable preinitiation complex. Together with SPT15/TBP UAF seems to stimulate basal transcription to a fully activated level. This Saccharomyces cerevisiae (strain ATCC 204508 / S288c) (Baker's yeast) protein is RNA polymerase I-specific transcription initiation factor RRN5 (RRN5).